A 447-amino-acid chain; its full sequence is Tubulin beta chain (447 aa).

8 residues coordinate GTP: Gln11, Glu69, Ser138, Gly142, Thr143, Gly144, Asn204, and Asn226. Glu69 serves as a coordination point for Mg(2+). The tract at residues 424–447 (QYQEASVSEGEEEYDEEAPLEGEE) is disordered. The span at 432–447 (EGEEEYDEEAPLEGEE) shows a compositional bias: acidic residues.

This sequence belongs to the tubulin family. In terms of assembly, dimer of alpha and beta chains. A typical microtubule is a hollow water-filled tube with an outer diameter of 25 nm and an inner diameter of 15 nM. Alpha-beta heterodimers associate head-to-tail to form protofilaments running lengthwise along the microtubule wall with the beta-tubulin subunit facing the microtubule plus end conferring a structural polarity. Microtubules usually have 13 protofilaments but different protofilament numbers can be found in some organisms and specialized cells. The cofactor is Mg(2+).

It is found in the cytoplasm. Its subcellular location is the cytoskeleton. Functionally, tubulin is the major constituent of microtubules, a cylinder consisting of laterally associated linear protofilaments composed of alpha- and beta-tubulin heterodimers. Microtubules grow by the addition of GTP-tubulin dimers to the microtubule end, where a stabilizing cap forms. Below the cap, tubulin dimers are in GDP-bound state, owing to GTPase activity of alpha-tubulin. The sequence is that of Tubulin beta chain from Venturia inaequalis (Apple scab fungus).